A 328-amino-acid polypeptide reads, in one-letter code: MTQAPVTVTVTGAAGQIGYALLFRIASGQLIGPDTPVRLRLLEIPQAVKAAEGTAMELDDCAFPLLQGIEVTDDARTAFDGTNVALLVGARPRTKGMERGDLLEANGGIFKPQGEAINAGAADDVRVLVVGNPANTNALIAQAHAPDVPAERFTAMTRLDHNRALTQLAQKLGVSVNDIKKLTIWGNHSATQYPDLFHAEVNGKVAAEQVDQAWLADTFIPTVAKRGAAIIEARGASSAASAANAAIDHIHTWVNGTPEGDWTSAAVVSDGSYGVPEGLISSFPVVARDGRYEIVQGLEIDEFSRQRIDASVNELSEERDAVRKLGLL.

12 to 18 contributes to the NAD(+) binding site; the sequence is GAAGQIG. Positions 93 and 99 each coordinate substrate. Residues asparagine 106, glutamine 113, and 130 to 132 each bind NAD(+); that span reads VGN. 2 residues coordinate substrate: asparagine 132 and arginine 163. Residue histidine 188 is the Proton acceptor of the active site.

Belongs to the LDH/MDH superfamily. MDH type 2 family.

It carries out the reaction (S)-malate + NAD(+) = oxaloacetate + NADH + H(+). In terms of biological role, catalyzes the reversible oxidation of malate to oxaloacetate. The sequence is that of Malate dehydrogenase from Saccharopolyspora erythraea (strain ATCC 11635 / DSM 40517 / JCM 4748 / NBRC 13426 / NCIMB 8594 / NRRL 2338).